Here is a 256-residue protein sequence, read N- to C-terminus: Probable S-methyl-5'-thioinosine phosphorylase (256 aa).

Phosphate is bound by residues T10 and 47 to 48 (RH). M178 contributes to the substrate binding site. Position 179 (T179) interacts with phosphate. 202 to 204 (NYA) is a binding site for substrate.

This sequence belongs to the PNP/MTAP phosphorylase family. MTAP subfamily. As to quaternary structure, homotrimer.

It carries out the reaction S-methyl-5'-thioinosine + phosphate = 5-(methylsulfanyl)-alpha-D-ribose 1-phosphate + hypoxanthine. The protein operates within purine metabolism; purine nucleoside salvage. Functionally, catalyzes the reversible phosphorylation of S-methyl-5'-thioinosine (MTI) to hypoxanthine and 5-methylthioribose-1-phosphate. Involved in the breakdown of S-methyl-5'-thioadenosine (MTA), a major by-product of polyamine biosynthesis. Catabolism of (MTA) occurs via deamination to MTI and phosphorolysis to hypoxanthine. The sequence is that of Probable S-methyl-5'-thioinosine phosphorylase from Methanopyrus kandleri (strain AV19 / DSM 6324 / JCM 9639 / NBRC 100938).